A 1014-amino-acid polypeptide reads, in one-letter code: C2 domain-containing protein 5 (1014 aa).

In terms of domain architecture, C2 spans 1–109 (MPGKLKVKIV…EAATVISGWF (109 aa)). Ca(2+) contacts are provided by Asp-19, Asp-26, Asp-76, Asp-78, Ser-81, and Asp-84. 4 disordered regions span residues 274–328 (LNPN…GRDG), 639–669 (ETVG…AELD), 801–878 (ALQV…HRGG), and 992–1014 (EAGP…DSAT). A compositionally biased stretch (polar residues) spans 275 to 292 (NPNTHSSGPSTPLKNQTY). Residues 293–318 (SFSPSKSFSRQSSSSDTDLSLTPKTG) show a composition bias toward low complexity. Residues 319–328 (MGSGSAGRDG) are compositionally biased toward gly residues. The segment covering 830-840 (SSDSPGPSTFS) has biased composition (polar residues). Over residues 993–1006 (AGPGQPTAPGPQSA) the composition is skewed to low complexity.

Requires Ca(2+) as cofactor.

The protein resides in the cytoplasmic vesicle membrane. It is found in the cytoplasm. The protein localises to the cell cortex. Its subcellular location is the cell membrane. It localises to the cell projection. The protein resides in the ruffle. Functionally, may be required for insulin-stimulated glucose transport and glucose transporter SLC2A4/GLUT4 translocation from intracellular glucose storage vesicle (GSV) to the plasma membrane (PM) in adipocytes. May bind phospholipid membranes in a calcium-dependent manner. The polypeptide is C2 domain-containing protein 5 (c2cd5) (Xenopus tropicalis (Western clawed frog)).